The sequence spans 349 residues: NADH-quinone oxidoreductase subunit H (349 aa).

A run of 8 helical transmembrane segments spans residues 16–36 (WPVV…MGCV), 88–108 (GLFI…WAVV), 123–143 (LLFL…AGWA), 157–177 (AAQM…VLLI), 202–222 (FLSW…ISGI), 264–284 (ILVS…PVGF), 285–305 (LPDG…IFLW), and 325–345 (VFIP…MSPL).

The protein belongs to the complex I subunit 1 family. As to quaternary structure, NDH-1 is composed of 14 different subunits. Subunits NuoA, H, J, K, L, M, N constitute the membrane sector of the complex.

Its subcellular location is the cell inner membrane. It carries out the reaction a quinone + NADH + 5 H(+)(in) = a quinol + NAD(+) + 4 H(+)(out). Functionally, NDH-1 shuttles electrons from NADH, via FMN and iron-sulfur (Fe-S) centers, to quinones in the respiratory chain. The immediate electron acceptor for the enzyme in this species is believed to be ubiquinone. Couples the redox reaction to proton translocation (for every two electrons transferred, four hydrogen ions are translocated across the cytoplasmic membrane), and thus conserves the redox energy in a proton gradient. This subunit may bind ubiquinone. This is NADH-quinone oxidoreductase subunit H from Azoarcus sp. (strain BH72).